The primary structure comprises 849 residues: ATP-binding cassette sub-family B member 6 (849 aa).

At 1–25 (MVRLGSYCEHNGSISQAWLDSGLSP) the chain is on the lumenal side. The interval 1-195 (MVRLGSYCEH…TLFLFVLGIR (195 aa)) is required for the lysosomal targeting. Residues 1–227 (MVRLGSYCEH…SQPLLRDPNQ (227 aa)) are required for ATPase activity. Cys8 and Cys26 are oxidised to a cystine. N-linked (GlcNAc...) asparagine glycosylation is present at Asn11. Residues 26–46 (CFYFTLVPSVLLSFSFLLGAL) form a helical membrane-spanning segment. Over 47–72 (QSALYARHSTTMEPKYIPRSRLYRLQ) the chain is Cytoplasmic. Residues 73–93 (IVLSVVLILQSVIGLIWQAAG) form a helical membrane-spanning segment. Over 94–98 (TDVVY) the chain is Lumenal. A helical transmembrane segment spans residues 99–119 (GYMIVHGCLSVVAWGFSLWLL). At 120–136 (HLERTRALVREKSRGHG) the chain is on the cytoplasmic side. The chain crosses the membrane as a helical span at residues 137–157 (VVLLLFWALAFAAENLAFISW). Residues 158-173 (QSPNWWWLSRDTVPQK) lie on the Lumenal side of the membrane. The helical transmembrane segment at 174–194 (VQFGLWITRYVCTLFLFVLGI) threads the bilayer. Over 195 to 254 (RAPGRPRKPYIVLINEDERDVETSQPLLRDPNQSTWQGFKKKLLLVMQYIWPRRNIPLQL) the chain is Cytoplasmic. A helical transmembrane segment spans residues 255 to 275 (LVALCMGLMGLERAINVFVPI). Residues 256–547 (VALCMGLMGL…FGTYYRMIQS (292 aa)) enclose the ABC transmembrane type-1 domain. Over 276 to 291 (YAKKIVDGLTEDSTWN) the chain is Lumenal. The chain crosses the membrane as a helical span at residues 292–312 (ILAVTVCIYVLLKFLQGGGAG). Topologically, residues 313–373 (TTGFLSNLRT…VDRGTSSINS (61 aa)) are cytoplasmic. The helical transmembrane segment at 374 to 394 (LLSYIVFSILPTIADIVIGIV) threads the bilayer. The Lumenal segment spans residues 395–401 (YFTSSFN). The chain crosses the membrane as a helical span at residues 402-422 (AWFGLIIFVCMTLYLTLTIII). Residues 423–492 (TEWRTKYRRE…ASLAMLNQTQ (70 aa)) lie on the Cytoplasmic side of the membrane. A helical transmembrane segment spans residues 493 to 513 (NLIIGLGLLAGSLLCAYFVTE). At 514-520 (NKFKVGD) the chain is on the lumenal side. The helical transmembrane segment at 521–541 (YVLFGTYIIQLYTPLNWFGTY) threads the bilayer. Topologically, residues 542-849 (YRMIQSSFID…PPKATPRRGH (308 aa)) are cytoplasmic. One can recognise an ABC transporter domain in the interval 581–815 (IEFENVHFSY…GGVYAGMWQK (235 aa)). ATP-binding positions include Tyr590 and 614–625 (GPSGSGKSTIIR). The span at 814–825 (QKQQSGSESSSD) shows a compositional bias: low complexity. Residues 814–849 (QKQQSGSESSSDSDSERKDRTSEKLQPPKATPRRGH) form a disordered region. A compositionally biased stretch (basic and acidic residues) spans 827 to 836 (DSERKDRTSE).

It belongs to the ABC transporter superfamily. ABCB family. Heavy Metal importer (TC 3.A.1.210) subfamily. Homodimer. In terms of processing, N-glycosylated.

Its subcellular location is the cell membrane. The protein localises to the mitochondrion outer membrane. It is found in the endoplasmic reticulum membrane. It localises to the golgi apparatus membrane. The protein resides in the endosome membrane. Its subcellular location is the lysosome membrane. The protein localises to the late endosome membrane. It is found in the early endosome membrane. It localises to the secreted. The protein resides in the extracellular exosome. Its subcellular location is the mitochondrion. The protein localises to the endosome. It is found in the multivesicular body membrane. It localises to the melanosome membrane. It catalyses the reaction heme b(in) + ATP + H2O = heme b(out) + ADP + phosphate + H(+). It carries out the reaction coproporphyrin III(in) + ATP + H2O = coproporphyrin III(out) + ADP + phosphate + H(+). The enzyme catalyses pheophorbide a(in) + ATP + H2O = pheophorbide a(out) + ADP + phosphate + H(+). The catalysed reaction is coproporphyrinogen III(in) + ATP + H2O = coproporphyrinogen III(out) + ADP + phosphate + H(+). It catalyses the reaction protoporphyrin IX(in) + ATP + H2O = protoporphyrin IX(out) + ADP + phosphate + H(+). It carries out the reaction coproporphyrin I(in) + ATP + H2O = coproporphyrin I(out) + ADP + phosphate + H(+). The enzyme catalyses uroporphyrin I(in) + ATP + H2O = uroporphyrin I(out) + ADP + phosphate + H(+). The catalysed reaction is uroporphyrin III(in) + ATP + H2O = uroporphyrin III(out) + ADP + phosphate + H(+). Functionally, ATP-dependent transporter that catalyzes the transport of a broad-spectrum of porphyrins from the cytoplasm to the extracellular space through the plasma membrane or into the vesicle lumen. May also function as an ATP-dependent importer of porphyrins from the cytoplasm into the mitochondria, in turn may participate in the de novo heme biosynthesis regulation and in the coordination of heme and iron homeostasis during phenylhydrazine stress. May also play a key role in the early steps of melanogenesis producing PMEL amyloid fibrils. In vitro, it confers to cells a resistance to toxic metal such as arsenic and cadmium and against chemotherapeutics agent such as 5-fluorouracil, SN-38 and vincristin. In addition may play a role in the transition metal homeostasis. The protein is ATP-binding cassette sub-family B member 6 (abcb6) of Xenopus tropicalis (Western clawed frog).